Consider the following 103-residue polypeptide: Large ribosomal subunit protein bL21 (103 aa).

It belongs to the bacterial ribosomal protein bL21 family. As to quaternary structure, part of the 50S ribosomal subunit. Contacts protein L20.

Functionally, this protein binds to 23S rRNA in the presence of protein L20. In Borrelia garinii subsp. bavariensis (strain ATCC BAA-2496 / DSM 23469 / PBi) (Borreliella bavariensis), this protein is Large ribosomal subunit protein bL21.